Here is a 286-residue protein sequence, read N- to C-terminus: D-tagatose-1,6-bisphosphate aldolase subunit KbaY (286 aa).

The active-site Proton donor is the Asp82. Residues His83 and His180 each coordinate Zn(2+). Gly181 is a dihydroxyacetone phosphate binding site. His208 lines the Zn(2+) pocket. Dihydroxyacetone phosphate contacts are provided by residues 209-211 and 230-233; these read GAS and NVAT.

The protein belongs to the class II fructose-bisphosphate aldolase family. TagBP aldolase KbaY subfamily. As to quaternary structure, homotetramer. Forms a complex with KbaZ. Zn(2+) is required as a cofactor.

The catalysed reaction is D-tagatofuranose 1,6-bisphosphate = D-glyceraldehyde 3-phosphate + dihydroxyacetone phosphate. The protein operates within carbohydrate metabolism; D-tagatose 6-phosphate degradation; D-glyceraldehyde 3-phosphate and glycerone phosphate from D-tagatose 6-phosphate: step 2/2. Functionally, catalytic subunit of the tagatose-1,6-bisphosphate aldolase KbaYZ, which catalyzes the reversible aldol condensation of dihydroxyacetone phosphate (DHAP or glycerone-phosphate) with glyceraldehyde 3-phosphate (G3P) to produce tagatose 1,6-bisphosphate (TBP). Requires KbaZ subunit for full activity and stability. The chain is D-tagatose-1,6-bisphosphate aldolase subunit KbaY from Escherichia coli O7:K1 (strain IAI39 / ExPEC).